A 914-amino-acid polypeptide reads, in one-letter code: MINSLLTRLFGSRNERQLRQLNSIVAKINALETELQKLSDTALQAKTTEFKQSIQDGKSLDKLLPEAFAVCREASRRVLGMRHYDVQLIGGMVLHLGKIAEMRTGEGKTLVATLPVYLNALAGKGVHVVTVNDYLARRDAAHMGRLYNWLGLSVGVVYPGMPHSDKQAAYGADITYGTNNEFGFDYLRDNMALSKADRYQRGLHYAIVDEVDSILIDEARTPLIISGPADESQDLYIRVNRIIPHLTRQENEEAEGDYWVDEKGKQVHLSEVGMERAEELLHQAGILEEGDDSLYAAQNLSVVHHLNAALRAHALYQRDVDYIVRDGEVVIVDEFTGRTLAGRRWSDGLHQAIEAKEGVPVQRENQTLASITFQNLFRIYKKLSGMTGTADTEAYEFQSIYGLEVMVIPTNRPTVRKDYPDQVFLNRSSKFNAVLEDIKDCAQRGQPVLVGTTSIEISEMLSEHLRKARVKHEVLNAKQHEREATIVANAGLPGAVTIATNMAGRGTDIVLGGSLDTVLAELDPDATEEDRFRVKTAWNRRHEAVKAAGGLHIIGTERHESRRIDNQLRGRAGRQGDPGSSRFYLSLEDSLMRIFASEWVQKVMRLMGMKEGDVIEDRRVTRQIERAQRKVEAHNFDIRKNLLDYDDVNNEQRKVVYAQRDELLDAESIKENIDSIRHEVIDALVTRFVPEHSIDEQWDLPGLQATLQSEWGLHLPLIEMLKGREEVDAERIAFLVQDAVDKHCAEREASIGAETMRALEKHVMLTVLDQGWKEHLATMDYLRQGIHLRGYAQKQPKQEYKREAFELFSEMLEHVKREVIASLARVRIRSEEEMATLEEQERRQVDTLLRQSQFQHQEAGGYGAGDEAVSLQRQPAGQGAAIAQVIRDTPKVGRNDPCPCGSGKKYKHCHGLVT.

ATP contacts are provided by residues Q87, 105 to 109 (GEGKT), and D508. C898, C900, C909, and H910 together coordinate Zn(2+).

Belongs to the SecA family. Monomer and homodimer. Part of the essential Sec protein translocation apparatus which comprises SecA, SecYEG and auxiliary proteins SecDF-YajC and YidC. Zn(2+) is required as a cofactor.

It is found in the cell inner membrane. It localises to the cytoplasm. The catalysed reaction is ATP + H2O + cellular proteinSide 1 = ADP + phosphate + cellular proteinSide 2.. Its function is as follows. Part of the Sec protein translocase complex. Interacts with the SecYEG preprotein conducting channel. Has a central role in coupling the hydrolysis of ATP to the transfer of proteins into and across the cell membrane, serving both as a receptor for the preprotein-SecB complex and as an ATP-driven molecular motor driving the stepwise translocation of polypeptide chains across the membrane. In Xylella fastidiosa (strain M12), this protein is Protein translocase subunit SecA.